A 699-amino-acid chain; its full sequence is NAD(P)H-quinone oxidoreductase subunit 5, chloroplastic (699 aa).

A run of 15 helical transmembrane segments spans residues 1 to 21, 32 to 52, 81 to 101, 117 to 137, 139 to 159, 177 to 197, 216 to 236, 250 to 270, 272 to 292, 319 to 339, 346 to 366, 388 to 408, 417 to 437, 539 to 559, and 598 to 618; these read WIIP…LLLF, WAFP…NLSI, IDPL…TVLI, FAYM…SNLI, IYIF…FWFT, GDFG…SFEF, LFVT…SAQF, TPIS…FLVA, LLPL…IGII, LGYM…FHLI, ALLF…VGYS, ISFL…CFWS, WLYS…TAFY, LFPL…GISF, and IFSV…YKPI.

It belongs to the complex I subunit 5 family. As to quaternary structure, NDH is composed of at least 16 different subunits, 5 of which are encoded in the nucleus.

Its subcellular location is the plastid. It localises to the chloroplast thylakoid membrane. It carries out the reaction a plastoquinone + NADH + (n+1) H(+)(in) = a plastoquinol + NAD(+) + n H(+)(out). The enzyme catalyses a plastoquinone + NADPH + (n+1) H(+)(in) = a plastoquinol + NADP(+) + n H(+)(out). NDH shuttles electrons from NAD(P)H:plastoquinone, via FMN and iron-sulfur (Fe-S) centers, to quinones in the photosynthetic chain and possibly in a chloroplast respiratory chain. The immediate electron acceptor for the enzyme in this species is believed to be plastoquinone. Couples the redox reaction to proton translocation, and thus conserves the redox energy in a proton gradient. This Digitalis grandiflora (Yellow foxglove) protein is NAD(P)H-quinone oxidoreductase subunit 5, chloroplastic (ndhF).